Consider the following 267-residue polypeptide: Fibroin light chain (267 aa).

An N-terminal signal peptide occupies residues methionine 1–alanine 16. Serine 19 is modified (N-acetylserine; in short form). A disulfide bridge links cysteine 103 with cysteine 162.

Silk fibroin elementary unit consists in a disulfide-linked heavy and light chain and a p25 glycoprotein in molar ratios of 6:6:1. This results in a complex of approximately 2.3 MDa. Partially N-terminally processed to yield a short form which lacks the first two residues of the long form. Post-translationally, the interchain disulfide bridge is essential for the intracellular transport and secretion of fibroin. Produced exclusively in the posterior (PSG) section of silk glands, which are essentially modified salivary glands.

It is found in the secreted. In terms of biological role, it is likely that the major role of L-chain is to prevent the retention of H-chain in ER by forming the disulfide linkage. In Galleria mellonella (Greater wax moth), this protein is Fibroin light chain (FIBL).